Reading from the N-terminus, the 796-residue chain is Protein SEY1 homolog (796 aa).

Residues 1-701 (MESSNDFSNK…AGTSISSWRN (701 aa)) lie on the Cytoplasmic side of the membrane. The region spanning 46 to 280 (GFRFNVVTIL…VPSDGFFVYS (235 aa)) is the GB1/RHD3-type G domain. 56 to 63 (GSQSSGKS) lines the GTP pocket. A coiled-coil region spans residues 554–626 (SLVLLLKAAR…DALTLLKVLK (73 aa)). A helical transmembrane segment spans residues 702–722 (IPPIFWLVLLVLGWNELRSVF). The Lumenal portion of the chain corresponds to 723 to 725 (KVL). Residues 726-746 (LRFYVVIPLLIVFYFTFSYSA) form a helical membrane-spanning segment. Topologically, residues 747–796 (TKLLGPKADQYVKPVRDKVLSLFTALLAWFVRTLHMIASKSSSFKQRPAT) are cytoplasmic.

This sequence belongs to the TRAFAC class dynamin-like GTPase superfamily. GB1/RHD3 GTPase family. RHD3 subfamily.

It localises to the endoplasmic reticulum membrane. Functionally, probable GTP-binding protein that may be involved in cell development. The protein is Protein SEY1 homolog of Theileria parva (East coast fever infection agent).